We begin with the raw amino-acid sequence, 176 residues long: MNKNDDKEGMAMFSALIEGIKPIAQDKRHFRTPLKTKQEIELKEQQLHADSYFSDTYQPLLPVQGPMRWLDEGVDSLELKRLRRGDYQPDLLLDLHGYRQSEAKLELAALIQACVKQQSQCCCVMHGYGTGILKQQVPMWLVQHPKVKAFHQAPKEWGGDAALLVLIDIGDQPHRR.

Residues 93 to 168 (LDLHGYRQSE…GDAALLVLID (76 aa)) form the Smr domain.

Belongs to the SmrB family. In terms of assembly, associates with collided ribosomes, but not with correctly translating polysomes.

Acts as a ribosome collision sensor. Detects stalled/collided disomes (pairs of ribosomes where the leading ribosome is stalled and a second ribosome has collided with it) and endonucleolytically cleaves mRNA at the 5' boundary of the stalled ribosome. Stalled/collided disomes form a new interface (primarily via the 30S subunits) that binds SmrB. Cleaved mRNA becomes available for tmRNA ligation, leading to ribosomal subunit dissociation and rescue of stalled ribosomes. This is Ribosome rescue factor SmrB from Shewanella sp. (strain ANA-3).